The sequence spans 299 residues: ATP phosphoribosyltransferase (299 aa).

This sequence belongs to the ATP phosphoribosyltransferase family. Long subfamily. As to quaternary structure, equilibrium between an active dimeric form, an inactive hexameric form and higher aggregates. Interconversion between the various forms is largely reversible and is influenced by the natural substrates and inhibitors of the enzyme. It depends on Mg(2+) as a cofactor.

It is found in the cytoplasm. It catalyses the reaction 1-(5-phospho-beta-D-ribosyl)-ATP + diphosphate = 5-phospho-alpha-D-ribose 1-diphosphate + ATP. It functions in the pathway amino-acid biosynthesis; L-histidine biosynthesis; L-histidine from 5-phospho-alpha-D-ribose 1-diphosphate: step 1/9. Feedback inhibited by histidine. Functionally, catalyzes the condensation of ATP and 5-phosphoribose 1-diphosphate to form N'-(5'-phosphoribosyl)-ATP (PR-ATP). Has a crucial role in the pathway because the rate of histidine biosynthesis seems to be controlled primarily by regulation of HisG enzymatic activity. This Salmonella agona (strain SL483) protein is ATP phosphoribosyltransferase.